Reading from the N-terminus, the 519-residue chain is Glucoamylase GLU1 (519 aa).

The N-terminal stretch at 1 to 27 (MKFGVLFSVFAAIVSALPLQEGPLNKR) is a signal peptide. Asparagine 115 and asparagine 127 each carry an N-linked (GlcNAc...) asparagine glycan. Position 166 (tryptophan 166) interacts with substrate. A glycan (N-linked (GlcNAc...) asparagine) is linked at asparagine 205. Aspartate 234 acts as the Proton acceptor in catalysis. Residue glutamate 237 is the Proton donor of the active site.

The protein belongs to the glycosyl hydrolase 15 family.

The catalysed reaction is Hydrolysis of terminal (1-&gt;4)-linked alpha-D-glucose residues successively from non-reducing ends of the chains with release of beta-D-glucose.. This chain is Glucoamylase GLU1 (GLU1), found in Saccharomycopsis fibuligera (Yeast).